The chain runs to 297 residues: Guanylate kinase (297 aa).

Positions 4-183 (GKMIIISGPS…AVAKITDVLH (180 aa)) constitute a Guanylate kinase-like domain. 11–18 (GPSGVGKG) lines the ATP pocket. Positions 204–297 (EQIVKEKYMY…EQKHYNNDEF (94 aa)) are unknown.

Belongs to the guanylate kinase family.

The protein resides in the cytoplasm. It catalyses the reaction GMP + ATP = GDP + ADP. Functionally, essential for recycling GMP and indirectly, cGMP. The polypeptide is Guanylate kinase (gmk) (Mycoplasma mycoides subsp. mycoides SC (strain CCUG 32753 / NCTC 10114 / PG1)).